The chain runs to 87 residues: Down syndrome critical region protein 10 (87 aa).

The sequence is that of Down syndrome critical region protein 10 (DSCR10) from Pan troglodytes (Chimpanzee).